The chain runs to 466 residues: ATP synthase subunit beta (466 aa).

153–160 is an ATP binding site; sequence GGAGVGKT.

This sequence belongs to the ATPase alpha/beta chains family. As to quaternary structure, F-type ATPases have 2 components, CF(1) - the catalytic core - and CF(0) - the membrane proton channel. CF(1) has five subunits: alpha(3), beta(3), gamma(1), delta(1), epsilon(1). CF(0) has three main subunits: a(1), b(2) and c(9-12). The alpha and beta chains form an alternating ring which encloses part of the gamma chain. CF(1) is attached to CF(0) by a central stalk formed by the gamma and epsilon chains, while a peripheral stalk is formed by the delta and b chains.

It localises to the cell membrane. The catalysed reaction is ATP + H2O + 4 H(+)(in) = ADP + phosphate + 5 H(+)(out). Its function is as follows. Produces ATP from ADP in the presence of a proton gradient across the membrane. The catalytic sites are hosted primarily by the beta subunits. The sequence is that of ATP synthase subunit beta from Oenococcus oeni (strain ATCC BAA-331 / PSU-1).